We begin with the raw amino-acid sequence, 181 residues long: Protein GrpE (181 aa).

Over residues 1-13 the composition is skewed to polar residues; it reads MENTQENPATQSA. The tract at residues 1–34 is disordered; it reads MENTQENPATQSAEDIGSAKQAAQGAAPAAEAAD. Over residues 19-34 the composition is skewed to low complexity; it reads AKQAAQGAAPAAEAAD.

Belongs to the GrpE family. In terms of assembly, homodimer.

The protein resides in the cytoplasm. Participates actively in the response to hyperosmotic and heat shock by preventing the aggregation of stress-denatured proteins, in association with DnaK and GrpE. It is the nucleotide exchange factor for DnaK and may function as a thermosensor. Unfolded proteins bind initially to DnaJ; upon interaction with the DnaJ-bound protein, DnaK hydrolyzes its bound ATP, resulting in the formation of a stable complex. GrpE releases ADP from DnaK; ATP binding to DnaK triggers the release of the substrate protein, thus completing the reaction cycle. Several rounds of ATP-dependent interactions between DnaJ, DnaK and GrpE are required for fully efficient folding. This chain is Protein GrpE, found in Burkholderia vietnamiensis (strain G4 / LMG 22486) (Burkholderia cepacia (strain R1808)).